The primary structure comprises 101 residues: MMFERVLFLSVYLFSIGIYGLITSRNMVRALICLELILNSINLNLVTFSDLFDSRQLKGDIFAIFVIALAAAEAAIGLSILSSIHRNRKSTRINQSNFLNN.

Transmembrane regions (helical) follow at residues 2–22 (MFERVLFLSVYLFSIGIYGLI), 32–52 (ICLELILNSINLNLVTFSDLF), and 61–81 (IFAIFVIALAAAEAAIGLSIL).

The protein belongs to the complex I subunit 4L family. NDH is composed of at least 16 different subunits, 5 of which are encoded in the nucleus.

Its subcellular location is the plastid. It is found in the chloroplast thylakoid membrane. It catalyses the reaction a plastoquinone + NADH + (n+1) H(+)(in) = a plastoquinol + NAD(+) + n H(+)(out). It carries out the reaction a plastoquinone + NADPH + (n+1) H(+)(in) = a plastoquinol + NADP(+) + n H(+)(out). Functionally, NDH shuttles electrons from NAD(P)H:plastoquinone, via FMN and iron-sulfur (Fe-S) centers, to quinones in the photosynthetic chain and possibly in a chloroplast respiratory chain. The immediate electron acceptor for the enzyme in this species is believed to be plastoquinone. Couples the redox reaction to proton translocation, and thus conserves the redox energy in a proton gradient. The chain is NAD(P)H-quinone oxidoreductase subunit 4L, chloroplastic from Zea mays (Maize).